Here is a 95-residue protein sequence, read N- to C-terminus: Ubiquinol-cytochrome-c reductase complex assembly factor 3 (95 aa).

Over 1–7 (MTTLRKL) the chain is Mitochondrial matrix. A helical transmembrane segment spans residues 8–28 (LLVGALLGAGAGVGTALFALV). Residues 23 to 80 (ALFALVTPGEERKQAMLKEMPEQYPQRRDEAARTKELLLATLQEAAATQENVAWRKNW) form a mediates lipid-binding region. Residues 29–95 (TPGEERKQAM…GGGGGGGRSA (67 aa)) are Mitochondrial intermembrane-facing.

It belongs to the UQCC3 family. As to quaternary structure, associates with the ubiquinol-cytochrome c reductase complex (mitochondrial respiratory chain complex III(CIII) or cytochrome b-c1 complex). Interacts with UQCC1. Forms a complex, named COMC, composed of UQCC1, UQCC2; UQCC3 and UQCC4; mediates MT-CYB hemylation and association with the first nuclear-encoded complex III subunit UQCRQ. Probably cleaved by OMA1 under mitochondrial stress conditions.

It localises to the mitochondrion inner membrane. Required for the assembly of the ubiquinol-cytochrome c reductase complex (mitochondrial respiratory chain complex III or cytochrome b-c1 complex), mediating cytochrome b recruitment and probably stabilization within the complex. Thereby, plays an important role in ATP production by mitochondria. Cardiolipin-binding protein, it may also control the cardiolipin composition of mitochondria membranes and their morphology. The polypeptide is Ubiquinol-cytochrome-c reductase complex assembly factor 3 (Bos taurus (Bovine)).